The following is a 218-amino-acid chain: Cytochrome b6 (218 aa).

The helical transmembrane segment at 35-55 threads the bilayer; sequence IFYCLGGITLVCFLVQFATGF. Heme c is bound at residue C38. Heme b is bound by residues H89 and H103. A run of 3 helical transmembrane segments spans residues 93-113, 119-139, and 189-209; these read ASMM…TGGF, LTWV…VTGY, and LHTF…FLMI. Heme b is bound by residues H190 and H205.

The protein belongs to the cytochrome b family. PetB subfamily. In terms of assembly, the 4 large subunits of the cytochrome b6-f complex are cytochrome b6, subunit IV (17 kDa polypeptide, PetD), cytochrome f and the Rieske protein, while the 4 small subunits are PetG, PetL, PetM and PetN. The complex functions as a dimer. Heme b serves as cofactor. Heme c is required as a cofactor.

The protein localises to the cellular thylakoid membrane. Component of the cytochrome b6-f complex, which mediates electron transfer between photosystem II (PSII) and photosystem I (PSI), cyclic electron flow around PSI, and state transitions. This Prochlorococcus marinus (strain MIT 9303) protein is Cytochrome b6.